Reading from the N-terminus, the 393-residue chain is Envelope glycoprotein D (393 aa).

The first 25 residues, 1–25 (MGRLTSGVGTAALLVVAVGLRVVCA), serve as a signal peptide directing secretion. The interaction with TNFRSF14 stretch occupies residues 25–57 (AKYALADPSLKMADPNRFRGKNLPVLDRLTDPP). Residues 26–339 (KYALADPSLK…HHAPAAPSNP (314 aa)) lie on the Virion surface side of the membrane. H64 lines the Zn(2+) pocket. Intrachain disulfides connect C91–C214, C131–C227, and C143–C152. N119 and N146 each carry an N-linked (GlcNAc...) asparagine; by host glycan. Zn(2+) is bound at residue D240. The interval 261 to 305 (LKIAGWHGPKPPYTSTLLPPELSDTTNATQPELVPEDPEDSALLE) is profusion. Over residues 274–290 (TSTLLPPELSDTTNATQ) the composition is skewed to polar residues. A disordered region spans residues 274–301 (TSTLLPPELSDTTNATQPELVPEDPEDS). N-linked (GlcNAc...) asparagine; by host glycosylation is present at N287. A helical membrane pass occupies residues 340–363 (GLIIGALAGSTLAVLVIGGIAFWV). At 364–393 (RRRAQMAPKRLRLPHIRDDDAPPSHQPLFY) the chain is on the intravirion side.

This sequence belongs to the herpesviridae glycoprotein D family. As to quaternary structure, homodimer. Interacts with host receptor TNFRSF14. Interacts with host receptor NECTIN1. Interacts with host receptor NECTIN2. Interacts (via profusion domain) with gB; this interaction occurs in the absence of gH/gL. Interacts (via profusion domain) with gH/gL heterodimer; this interaction occurs in the absence of gB. Associates with the gB-gH/gL-gD complex. Interacts (via C-terminus) with UL11 tegument protein.

The protein resides in the virion membrane. Envelope glycoprotein that binds to the host cell entry receptors NECTIN1, NECTIN2 and TNFRSF14/HVEM, promoting the virus entry into host cells. May trigger fusion with host membrane, by recruiting the fusion machinery composed of gB and gH/gL. The protein is Envelope glycoprotein D (gD) of Homo sapiens (Human).